We begin with the raw amino-acid sequence, 2225 residues long: Nonribisomal peptide synthetase notE' (2225 aa).

The interval Thr-24 to Ser-59 is disordered. A compositionally biased stretch (low complexity) spans Ser-28 to Pro-49. Residues Gln-83 to Arg-482 are adenylation 1. The region spanning Ser-614–Thr-690 is the Carrier 1 domain. O-(pantetheine 4'-phosphoryl)serine is present on Ser-651. The segment at Glu-730–Leu-1142 is condensation 1. An adenylation 2 region spans residues Ala-1164–Arg-1563. Residues Pro-1699 to Gln-1775 form the Carrier 2 domain. O-(pantetheine 4'-phosphoryl)serine is present on Ser-1736. A condensation 2 region spans residues Phe-1827–Met-2138.

The protein belongs to the NRP synthetase family.

The catalysed reaction is L-proline + L-tryptophan + 2 ATP = brevianamide F + 2 AMP + 2 diphosphate + 2 H(+). It participates in alkaloid biosynthesis. In terms of biological role, nonribisomal peptide synthetase; part of the gene cluster that mediates the biosynthesis of notoamide, a fungal indole alkaloid that belongs to a family of natural products containing a characteristic bicyclo[2.2.2]diazaoctane core. The first step of notoamide biosynthesis involves coupling of L-proline and L-tryptophan by the bimodular NRPS notE', to produce cyclo-L-tryptophan-L-proline called brevianamide F. The reverse prenyltransferase notF' then acts as a deoxybrevianamide E synthase and converts brevianamide F to deoxybrevianamide E via reverse prenylation at C-2 of the indole ring leading to the bicyclo[2.2.2]diazaoctane core. Deoxybrevianamide E is further hydroxylated at C-6 of the indole ring, likely catalyzed by the cytochrome P450 monooxygenase notG', to yield 6-hydroxy-deoxybrevianamide E. 6-hydroxy-deoxybrevianamide E is a specific substrate of the prenyltransferase notC' for normal prenylation at C-7 to produce 6-hydroxy-7-prenyl-deoxybrevianamide, also called notoamide S. As the proposed pivotal branching point in notoamide biosynthesis, notoamide S can be diverted to notoamide E through an oxidative pyran ring closure putatively catalyzed by either notH' cytochrome P450 monooxygenase or the notD' FAD-linked oxidoreductase. This step would be followed by an indole 2,3-epoxidation-initiated pinacol-like rearrangement catalyzed by the notB' FAD-dependent monooxygenase leading to the formation of notoamide C and notoamide D. On the other hand notoamide S is converted to notoamide T by notH' (or notD'), a bifunctional oxidase that also functions as the intramolecular Diels-Alderase responsible for generation of (-)-notoamide T. To generate antipodal (+)-notoaminide T, notH (or notD) in Aspergillus strain MF297-2 is expected to catalyze a Diels-Alder reaction leading to the opposite stereochemistry. The remaining oxidoreductase notD' (or notH') likely catalyzes the oxidative pyran ring formation to yield (-)-stephacidin A. The FAD-dependent monooxygenase notI' is highly similar to notB' and is predicted to catalyze a similar conversion from (-)-stephacidin A to (+)-notoamide B via the 2,3-epoxidation of (-)-stephacidin A followed by a pinacol-type rearrangement. Finally, it remains unclear which enzyme could be responsible for the final hydroxylation steps leading to notoamide A and sclerotiamide. In Aspergillus versicolor, this protein is Nonribisomal peptide synthetase notE'.